The following is a 1658-amino-acid chain: Silent chromatin protein ESC1 (1658 aa).

A compositionally biased stretch (basic and acidic residues) spans Asp-36–Arg-54. Disordered stretches follow at residues Asp-36–Ile-76 and Thr-156–Glu-499. 2 stretches are compositionally biased toward acidic residues: residues Leu-205–Glu-214 and Ser-245–Gly-254. A compositionally biased stretch (polar residues) spans Gly-262–Ser-286. Residues Val-289 to Lys-305 are compositionally biased toward acidic residues. The segment covering Val-335–Glu-352 has biased composition (basic and acidic residues). The span at Val-365–Gln-375 shows a compositional bias: acidic residues. Positions Val-386 to Lys-397 are enriched in basic and acidic residues. Over residues Glu-398–Asp-407 the composition is skewed to acidic residues. Residues Ser-408–Glu-417 show a composition bias toward low complexity. 3 stretches are compositionally biased toward basic and acidic residues: residues Glu-425–Ser-435, Ser-442–Gln-461, and Asp-471–Phe-482. Phosphothreonine is present on Thr-500. Ser-532 carries the phosphoserine modification. 2 disordered regions span residues Ser-550–Glu-584 and Leu-589–Ser-608. Polar residues predominate over residues Gly-568–Gly-577. Residues Ser-579, Ser-583, Ser-608, and Ser-662 each carry the phosphoserine modification. Disordered regions lie at residues Ser-770–Thr-819, Glu-863–Thr-964, and Glu-1082–Lys-1115. The segment covering Gln-800–Asp-812 has biased composition (polar residues). Phosphoserine is present on residues Ser-865 and Ser-866. The segment covering Glu-869–Ser-878 has biased composition (basic and acidic residues). Residues Lys-879–Lys-905 show a composition bias toward polar residues. Residues Ser-888 and Ser-911 each carry the phosphoserine modification. The segment covering Ser-918–Lys-931 has biased composition (basic and acidic residues). Acidic residues predominate over residues Leu-932 to Ser-956. A phosphoserine mark is found at Ser-937, Ser-1092, Ser-1096, Ser-1098, Ser-1166, Ser-1176, and Ser-1178. Polar residues predominate over residues Glu-1082 to Ser-1096. The span at Asp-1097–Lys-1115 shows a compositional bias: basic and acidic residues. The segment covering Ser-1197 to Val-1207 has biased composition (polar residues). The segment at Ser-1197–Glu-1216 is disordered. Phosphoserine is present on residues Ser-1214 and Ser-1254. The span at Val-1261–Glu-1272 shows a compositional bias: basic and acidic residues. Residues Val-1261 to Asp-1315 form a disordered region. Residues Ser-1290, Ser-1326, and Ser-1332 each carry the phosphoserine modification. Disordered stretches follow at residues Arg-1334–Glu-1482 and Pro-1503–Lys-1658. Positions Leu-1335–Asn-1366 are enriched in basic and acidic residues. Residues Ser-1403, Ser-1409, Ser-1450, and Ser-1454 each carry the phosphoserine modification. Residues Leu-1407 to Gly-1423 are compositionally biased toward acidic residues. Polar residues predominate over residues Tyr-1463–Thr-1479. The span at Leu-1507–Asp-1537 shows a compositional bias: basic and acidic residues. Phosphoserine is present on Ser-1539. 2 stretches are compositionally biased toward basic and acidic residues: residues Pro-1550–Lys-1564 and Val-1575–Ser-1591. A phosphoserine mark is found at Ser-1590 and Ser-1591. Over residues Thr-1607–Lys-1626 the composition is skewed to basic residues. Over residues Arg-1648–Lys-1658 the composition is skewed to polar residues.

As to quaternary structure, interacts with SIR4.

The protein resides in the nucleus. Involved in the clustering of telomeres at the nuclear periphery, forming discrete subcompartments that accumulate a complex of histone-binding silencing factors like SIR4. Required for SIR4-mediated anchoring and partitioning of plasmids. The protein is Silent chromatin protein ESC1 (ESC1) of Saccharomyces cerevisiae (strain ATCC 204508 / S288c) (Baker's yeast).